Here is an 807-residue protein sequence, read N- to C-terminus: Glycerol-3-phosphate acyltransferase (807 aa).

The short motif at 305-310 (CHRSHM) is the HXXXXD motif element.

This sequence belongs to the GPAT/DAPAT family.

The protein resides in the cell inner membrane. The enzyme catalyses sn-glycerol 3-phosphate + an acyl-CoA = a 1-acyl-sn-glycero-3-phosphate + CoA. It functions in the pathway phospholipid metabolism; CDP-diacylglycerol biosynthesis; CDP-diacylglycerol from sn-glycerol 3-phosphate: step 1/3. The chain is Glycerol-3-phosphate acyltransferase from Klebsiella pneumoniae subsp. pneumoniae (strain ATCC 700721 / MGH 78578).